The chain runs to 247 residues: Transcription factor otaR1 (247 aa).

Disordered stretches follow at residues 1-48 (MEPA…ETSM) and 100-143 (DNAS…PLGN). The segment covering 23–47 (DESSSTGLSLGSLLSSSNDLSSETS) has biased composition (low complexity). Over residues 134–143 (ANPTSVPLGN) the composition is skewed to polar residues. A basic motif region spans residues 156–196 (KKYHEKYKERNRVAAGKSRQKQVDLIELLQAEQREEERRRK). In terms of domain architecture, bZIP spans 156-219 (KKYHEKYKER…LDLKQELQHH (64 aa)). Positions 198–212 (LERELSQIHKELLDL) are leucine-zipper.

The protein localises to the nucleus. Functionally, transcription factor; part of the gene cluster that mediates the biosynthesis of ochratoxin A (OTA), a mycotoxin demonstrated to have nephrotoxic, immunotoxic, genotoxic, neurotoxic, and teratogenic properties. Positively regulates the expression of the cluster genes otaA, otaB, otaC and otaD, and the subsequent production of OTA. This is Transcription factor otaR1 from Aspergillus carbonarius (strain ITEM 5010).